We begin with the raw amino-acid sequence, 449 residues long: N-succinylarginine dihydrolase (449 aa).

Residues 19 to 28, Asn-110, and 137 to 138 each bind substrate; these read GGLSYGNVAS and HR. Residues 23–43 form a disordered region; sequence YGNVASQSNSQQGSNPREAAR. Polar residues predominate over residues 25-37; sequence NVASQSNSQQGSN. Glu-174 is a catalytic residue. Arg-214 contributes to the substrate binding site. The active site involves His-250. Substrate contacts are provided by Asp-252 and Asn-365. Cys-371 (nucleophile) is an active-site residue.

Belongs to the succinylarginine dihydrolase family. In terms of assembly, homodimer.

It carries out the reaction N(2)-succinyl-L-arginine + 2 H2O + 2 H(+) = N(2)-succinyl-L-ornithine + 2 NH4(+) + CO2. Its pathway is amino-acid degradation; L-arginine degradation via AST pathway; L-glutamate and succinate from L-arginine: step 2/5. In terms of biological role, catalyzes the hydrolysis of N(2)-succinylarginine into N(2)-succinylornithine, ammonia and CO(2). This is N-succinylarginine dihydrolase from Pseudomonas putida (strain GB-1).